The primary structure comprises 437 residues: 5-hydroxytryptamine receptor 3B (437 aa).

The N-terminal stretch at 1 to 21 (MILLWSCLLVAVVGILGTATP) is a signal peptide. Topologically, residues 22 to 238 (QPGNSSLHRL…VVIRRCPLAY (217 aa)) are extracellular. 3 N-linked (GlcNAc...) asparagine glycosylation sites follow: asparagine 25, asparagine 92, and asparagine 134. A disulfide bridge connects residues cysteine 151 and cysteine 165. A helical membrane pass occupies residues 239 to 259 (VVSLLIPSIFLMLVDLGSFYL). Residues 260 to 264 (PPNCR) lie on the Cytoplasmic side of the membrane. Residues 265–282 (ARIVFKTNVLVGYTVFRV) traverse the membrane as a helical segment. Asparagine 283 carries an N-linked (GlcNAc...) asparagine glycan. The Extracellular portion of the chain corresponds to 283-292 (NMSDEVPRSA). A helical membrane pass occupies residues 293 to 313 (GCTPLIGVFFTVCMALLVLSL). Residues 314 to 410 (SKSILLIKFL…WLAILYRFDQ (97 aa)) are Cytoplasmic-facing. The interval 377 to 409 (FWFQFRSINNSLRTRDQIHQKEVEWLAILYRFD) is HA-stretch; determines single-channel conductance in 5-HT3 receptors. Residues 411–431 (LLFRIYLAVLGLYTVTLCSLW) traverse the membrane as a helical segment. Topologically, residues 432–437 (ALWSRM) are extracellular.

This sequence belongs to the ligand-gated ion channel (TC 1.A.9) family. 5-hydroxytryptamine receptor (TC 1.A.9.2) subfamily. HTR3B sub-subfamily. As to quaternary structure, forms homopentameric as well as heteropentameric serotonin-activated cation-selective channel complexes with HTR3A. The homomeric complex is not functional. Heteropentameric complexes display properties which resemble that of neuronal serotonin-activated channels in vivo. In terms of processing, N-glycosylation is required for membrane localization.

It localises to the postsynaptic cell membrane. The protein resides in the cell membrane. It catalyses the reaction Na(+)(in) = Na(+)(out). It carries out the reaction K(+)(in) = K(+)(out). The enzyme catalyses Ca(2+)(in) = Ca(2+)(out). Functionally, forms serotonin (5-hydroxytryptamine/5-HT3)-activated cation-selective channel complexes, which when activated cause fast, depolarizing responses in neurons. The polypeptide is 5-hydroxytryptamine receptor 3B (Mus musculus (Mouse)).